A 525-amino-acid polypeptide reads, in one-letter code: uncharacterized protein (525 aa).

Composition is skewed to polar residues over residues 139-149 (LNSTPDKTQAG) and 336-349 (SGKT…HTTS). Disordered stretches follow at residues 139–158 (LNST…HQAP) and 330–356 (PAPA…PYAT).

This is an uncharacterized protein from Treponema pallidum (strain Nichols).